We begin with the raw amino-acid sequence, 130 residues long: Small ribosomal subunit protein uS8 (130 aa).

The protein belongs to the universal ribosomal protein uS8 family. Part of the 30S ribosomal subunit.

In terms of biological role, one of the primary rRNA binding proteins, it binds directly to 16S rRNA central domain where it helps coordinate assembly of the platform of the 30S subunit. This Methanocorpusculum labreanum (strain ATCC 43576 / DSM 4855 / Z) protein is Small ribosomal subunit protein uS8.